A 72-amino-acid polypeptide reads, in one-letter code: Heat shock factor-binding protein 1-like protein 1 (72 aa).

Residues 12–62 (DLLQNAAENLLLEVEEHFQALTTTLNLRMEEMGSRIEDLQRNVDDLMTQAG) are a coiled coil.

This sequence belongs to the HSBP1 family.

In Mus musculus (Mouse), this protein is Heat shock factor-binding protein 1-like protein 1 (Hsbp1l1).